A 509-amino-acid polypeptide reads, in one-letter code: MEEIQRYLQPDRSQQHNFLYPLIFQEYIYALAHDHGLNRNRSILLENPGYNNKLSFLIVKRLITRMYQQNHFLISTNDSNKNSFLGCNKSLYSQMISEGFAFIVEIPFSLRLISSLSSFEGKKIFKSYNLRSIHSTFPFLEDNFSHLNYVLDILIPYPVHLEILVQTLRYWVKDASSLHLLRFFLHEFWNLNSLITSKKPGYSFSKKNQRFFFFLYNSYVYECESTFVFLRNQSSHLRSTSFGALLERIYFYGKIERLVEVFAKDFQVTLWLFKDPFMHYVRYQGKSILASKGTFLLMNKWKFYLVNFWQCHCSLCFHTGRIHINQLSNHSRDFMGYLSSVRLNPSMVRSQMLENSFLINNAIKKFDTLVPIIPLIGSLAKANFCTVLGHPISKPVWSDLSDSDIIDRFGRICRNLFHYYSGSSKKKTLYRIKYILRLSCARTLARKHKSTVRTFLKRSGSELLEEFLTSEEQVLSLTFPRASSSLWGVYRSRIWYLDIFCINDLANYQ.

It belongs to the intron maturase 2 family. MatK subfamily.

Its subcellular location is the plastid. The protein localises to the chloroplast. Functionally, usually encoded in the trnK tRNA gene intron. Probably assists in splicing its own and other chloroplast group II introns. This Nicotiana sylvestris (Wood tobacco) protein is Maturase K.